Consider the following 429-residue polypeptide: Histidine--tRNA ligase (429 aa).

Belongs to the class-II aminoacyl-tRNA synthetase family. In terms of assembly, homodimer.

It is found in the cytoplasm. It carries out the reaction tRNA(His) + L-histidine + ATP = L-histidyl-tRNA(His) + AMP + diphosphate + H(+). This chain is Histidine--tRNA ligase, found in Streptococcus mutans serotype c (strain ATCC 700610 / UA159).